The primary structure comprises 446 residues: 3-phosphoshikimate 1-carboxyvinyltransferase (446 aa).

The 3-phosphoshikimate site is built by Lys-27, Ser-28, and Arg-32. Lys-27 contacts phosphoenolpyruvate. Positions 100 and 128 each coordinate phosphoenolpyruvate. Residues Ser-177, Gln-179, Asp-330, and Lys-357 each coordinate 3-phosphoshikimate. Gln-179 lines the phosphoenolpyruvate pocket. The Proton acceptor role is filled by Asp-330. Residues Arg-361 and Arg-406 each coordinate phosphoenolpyruvate.

The protein belongs to the EPSP synthase family. Monomer.

The protein resides in the cytoplasm. The enzyme catalyses 3-phosphoshikimate + phosphoenolpyruvate = 5-O-(1-carboxyvinyl)-3-phosphoshikimate + phosphate. Its pathway is metabolic intermediate biosynthesis; chorismate biosynthesis; chorismate from D-erythrose 4-phosphate and phosphoenolpyruvate: step 6/7. Catalyzes the transfer of the enolpyruvyl moiety of phosphoenolpyruvate (PEP) to the 5-hydroxyl of shikimate-3-phosphate (S3P) to produce enolpyruvyl shikimate-3-phosphate and inorganic phosphate. This is 3-phosphoshikimate 1-carboxyvinyltransferase from Sphingopyxis alaskensis (strain DSM 13593 / LMG 18877 / RB2256) (Sphingomonas alaskensis).